We begin with the raw amino-acid sequence, 287 residues long: MAEHFKQIIRCPVCLKDLEEAVQLKCGYACCLQCLNSLQKEPDGEGLLCRFCSVVSQKDDIKPKYKLRALVSIIKELEPKLKSVLTMNPRMRKFQVDMTFDVDTANNYLIISEDLRSFRSGDLSQNRKEQAERFDTALCVLGTPRFTSGRHYWEVDVGTSQVWDVGVCKESVNRQGKIELSSEHGFLTVGCREGKVFAASTVPMTPLWVSPQLHRVGIFLDVGMRSIAFYNVSDGCHINTFIEIPVCEPWRPFFAHKRGSQDDQSILSICSVINPSTASAPVSSEGK.

Residues 11-53 (CPVCLKDLEEAVQLKCGYACCLQCLNSLQKEPDGEGLLCRFCS) form an RING-type; degenerate zinc finger. The B30.2/SPRY domain occupies 78–276 (EPKLKSVLTM…LSICSVINPS (199 aa)).

The polypeptide is Ret finger protein-like 4A-like protein 1 (RFPL4AL1) (Homo sapiens (Human)).